Reading from the N-terminus, the 747-residue chain is Internal virion protein gp15 (747 aa).

The protein belongs to the T7virus internal virion protein gp15 family. Homooctamer. Interacts with gp16; after ejection the gp15-gp16 complex composed of a gp15 octamer and a gp16 tetramer probably binds both the viral DNA and the host inner membrane. Interacts with gp14.

It localises to the virion. Its subcellular location is the host periplasm. Its function is as follows. Component of the cylindrical core that assembles on the inner surface of the capsid during capsid formation and plays a role in viral DNA ejection into the host cell. The inner core is composed of stacked rings of gp14, gp15 and gp16 proteins. Following binding to the host cell surface, the internal core is disassembled and gp15 is ejected along with gp14 and gp16 into the infected cell. Gp15 probably remains associated with gp16. The gp15-gp16 complex binds to both the viral DNA and the host inner membrane, probably escorting the leading end of the genome through the periplasm and controlling the extend of DNA translocated into the host cell. This chain is Internal virion protein gp15, found in Escherichia phage T7 (Bacteriophage T7).